Consider the following 222-residue polypeptide: Beta-amylase (222 aa).

Thr36 provides a ligand contact to substrate. Glu74 functions as the Proton acceptor in the catalytic mechanism. Substrate-binding positions include 75–76 and Arg114; that span reads NA.

It belongs to the glycosyl hydrolase 14 family.

It carries out the reaction Hydrolysis of (1-&gt;4)-alpha-D-glucosidic linkages in polysaccharides so as to remove successive maltose units from the non-reducing ends of the chains.. In Secale cereale (Rye), this protein is Beta-amylase (BMY1).